A 426-amino-acid chain; its full sequence is Histidine--tRNA ligase (426 aa).

It belongs to the class-II aminoacyl-tRNA synthetase family. As to quaternary structure, homodimer.

The protein resides in the cytoplasm. It carries out the reaction tRNA(His) + L-histidine + ATP = L-histidyl-tRNA(His) + AMP + diphosphate + H(+). This chain is Histidine--tRNA ligase, found in Legionella pneumophila subsp. pneumophila (strain Philadelphia 1 / ATCC 33152 / DSM 7513).